Consider the following 691-residue polypeptide: Protein phosphatase 1 regulatory subunit 37 (691 aa).

The disordered stretch occupies residues 1-43; that stretch reads MEIAPQEAPPVPGADGDIEEAPAEAGSPSPASPPADGRLKAAA. Ser-50 and Ser-56 each carry phosphoserine. 5 LRR repeats span residues 220–240, 248–269, 277–297, 306–326, and 334–354; these read SLAV…MLLA, NLRE…AQLG, SLQI…AYIC, GLVT…AFLG, and SLET…RHLK. A disordered region spans residues 460–662; sequence EREEKEQPPQ…PEVKGGSCGL (203 aa). Over residues 468–481 the composition is skewed to polar residues; the sequence is PQLSASMPETTATE. Over residues 505–523 the composition is skewed to acidic residues; that stretch reads SDSDSDSDGEEEEEEEGER. Residue Ser-561 is modified to Phosphoserine. Pro residues-rich tracts occupy residues 584 to 605 and 620 to 634; these read PASP…PSLP and PQPP…PPLP.

It belongs to the PPP1R37 family. As to quaternary structure, interacts with PPP1CA.

Its function is as follows. Inhibits phosphatase activity of protein phosphatase 1 (PP1) complexes. This Homo sapiens (Human) protein is Protein phosphatase 1 regulatory subunit 37 (PPP1R37).